Consider the following 98-residue polypeptide: Small ribosomal subunit protein bS20 (98 aa).

Residues 1 to 12 (MAPKKTTKKGGP) are compositionally biased toward basic residues. The tract at residues 1–20 (MAPKKTTKKGGPQKRPSAEK) is disordered.

Belongs to the bacterial ribosomal protein bS20 family.

Its function is as follows. Binds directly to 16S ribosomal RNA. This Chlamydia caviae (strain ATCC VR-813 / DSM 19441 / 03DC25 / GPIC) (Chlamydophila caviae) protein is Small ribosomal subunit protein bS20.